We begin with the raw amino-acid sequence, 146 residues long: Large ribosomal subunit protein uL16 (146 aa).

This sequence belongs to the universal ribosomal protein uL16 family. In terms of assembly, part of the 50S ribosomal subunit.

Its function is as follows. Binds 23S rRNA and is also seen to make contacts with the A and possibly P site tRNAs. The polypeptide is Large ribosomal subunit protein uL16 (Lactobacillus helveticus (strain DPC 4571)).